A 798-amino-acid polypeptide reads, in one-letter code: Glycogen phosphorylase (798 aa).

At Lys646 the chain carries N6-(pyridoxal phosphate)lysine.

The protein belongs to the glycogen phosphorylase family. Pyridoxal 5'-phosphate is required as a cofactor.

It carries out the reaction [(1-&gt;4)-alpha-D-glucosyl](n) + phosphate = [(1-&gt;4)-alpha-D-glucosyl](n-1) + alpha-D-glucose 1-phosphate. Phosphorylase is an important allosteric enzyme in carbohydrate metabolism. Enzymes from different sources differ in their regulatory mechanisms and in their natural substrates. However, all known phosphorylases share catalytic and structural properties. This Bacillus subtilis (strain 168) protein is Glycogen phosphorylase (glgP).